Consider the following 309-residue polypeptide: MSQVGSAGEGSNSMAAAPPPRLLLLVVLLLVPVSNAIYCEEDDCYDLLGVKQDANVSEIKKAYYKLSLKHHPDKNPDPESRKLFVKIANAYEILKDESTRGQYDYAIAHPEEVFYNTAQYYRAYYGHKTDPRAVLIGLLLIISAFQYLNQFGRYSKAIETVKQTPAYKNRLKALEFERTGGISSKKKGHKQMDKKVEEVLSNEVELQIQGVEKPSLWRLYGVQFILLPYSIGKVLSWKFCWFWRYRIKKLPYAWEDACYLTRMSLKIPANTWENIDDYRKENLVMKRLWEKNNMERYIAEMRKESKRRR.

Residues 1-36 (MSQVGSAGEGSNSMAAAPPPRLLLLVVLLLVPVSNA) form the signal peptide. Topologically, residues 37–130 (IYCEEDDCYD…YRAYYGHKTD (94 aa)) are lumenal. The 65-residue stretch at 43-107 (DCYDLLGVKQ…STRGQYDYAI (65 aa)) folds into the J domain. N-linked (GlcNAc...) asparagine glycosylation is present at Asn55. The helical transmembrane segment at 131–151 (PRAVLIGLLLIISAFQYLNQF) threads the bilayer. At 152-219 (GRYSKAIETV…GVEKPSLWRL (68 aa)) the chain is on the cytoplasmic side. Residues 220–242 (YGVQFILLPYSIGKVLSWKFCWF) traverse the membrane as a helical segment. Topologically, residues 243-309 (WRYRIKKLPY…EMRKESKRRR (67 aa)) are lumenal.

It localises to the endoplasmic reticulum membrane. Functionally, may play a role in protein folding in the endoplasmic reticulum. The protein is DnaJ protein ERDJ7 of Oryza sativa subsp. japonica (Rice).